A 152-amino-acid chain; its full sequence is Mediator of RNA polymerase II transcription subunit 9 (152 aa).

Residues 98 to 150 adopt a coiled-coil conformation; it reads IKRCKALLQENEEVRNLLANSIEEWENIIADKEQQLRVKAKVLRDLDARIEKI.

Belongs to the Mediator complex subunit 9 family. Component of the Mediator complex.

The protein localises to the nucleus. Functionally, component of the Mediator complex, a coactivator involved in the regulated transcription of nearly all RNA polymerase II-dependent genes. Mediator functions as a bridge to convey information from gene-specific regulatory proteins to the basal RNA polymerase II transcription machinery. Mediator is recruited to promoters by direct interactions with regulatory proteins and serves as a scaffold for the assembly of a functional preinitiation complex with RNA polymerase II and the general transcription factors. The polypeptide is Mediator of RNA polymerase II transcription subunit 9 (CSE2) (Candida glabrata (strain ATCC 2001 / BCRC 20586 / JCM 3761 / NBRC 0622 / NRRL Y-65 / CBS 138) (Yeast)).